The chain runs to 258 residues: UPF0246 protein YaaA (258 aa).

It belongs to the UPF0246 family.

This Shigella flexneri serotype 5b (strain 8401) protein is UPF0246 protein YaaA.